A 298-amino-acid chain; its full sequence is Probable phosphoserine phosphatase (298 aa).

D82 functions as the Nucleophile in the catalytic mechanism. Mg(2+)-binding residues include D82 and D84. D84 acts as the Proton donor in catalysis. Residues E91, R127, 170 to 171, and K217 each bind substrate; that span reads SG. A Mg(2+)-binding site is contributed by D240. N243 is a substrate binding site.

This sequence belongs to the HAD-like hydrolase superfamily. SerB family. Requires Mg(2+) as cofactor.

It carries out the reaction O-phospho-L-serine + H2O = L-serine + phosphate. The catalysed reaction is O-phospho-D-serine + H2O = D-serine + phosphate. Its pathway is amino-acid biosynthesis; L-serine biosynthesis; L-serine from 3-phospho-D-glycerate: step 3/3. The sequence is that of Probable phosphoserine phosphatase from Schizosaccharomyces pombe (strain 972 / ATCC 24843) (Fission yeast).